The sequence spans 402 residues: Elongation factor Tu (402 aa).

Residues 16–211 form the tr-type G domain; it reads KEHINIGTIG…AVDSYIDSPV (196 aa). Residues 25–32 form a G1 region; it reads GHVDHGKT. 25-32 contacts GTP; sequence GHVDHGKT. Residue T32 coordinates Mg(2+). The tract at residues 66 to 70 is G2; that stretch reads GITIN. Residues 87–90 are G3; sequence DCPG. GTP contacts are provided by residues 87–91 and 142–145; these read DCPGH and NKID. Residues 142-145 are G4; the sequence is NKID. The G5 stretch occupies residues 181-183; sequence SAR.

Belongs to the TRAFAC class translation factor GTPase superfamily. Classic translation factor GTPase family. EF-Tu/EF-1A subfamily. As to quaternary structure, monomer.

Its subcellular location is the cytoplasm. The catalysed reaction is GTP + H2O = GDP + phosphate + H(+). Its function is as follows. GTP hydrolase that promotes the GTP-dependent binding of aminoacyl-tRNA to the A-site of ribosomes during protein biosynthesis. In Mesomycoplasma hyopneumoniae (strain 232) (Mycoplasma hyopneumoniae), this protein is Elongation factor Tu.